Consider the following 255-residue polypeptide: NAD(P)H-quinone oxidoreductase subunit K, chloroplastic (255 aa).

C47, C48, C112, and C143 together coordinate [4Fe-4S] cluster.

It belongs to the complex I 20 kDa subunit family. As to quaternary structure, NDH is composed of at least 16 different subunits, 5 of which are encoded in the nucleus. Requires [4Fe-4S] cluster as cofactor.

Its subcellular location is the plastid. The protein localises to the chloroplast thylakoid membrane. The catalysed reaction is a plastoquinone + NADH + (n+1) H(+)(in) = a plastoquinol + NAD(+) + n H(+)(out). It carries out the reaction a plastoquinone + NADPH + (n+1) H(+)(in) = a plastoquinol + NADP(+) + n H(+)(out). In terms of biological role, NDH shuttles electrons from NAD(P)H:plastoquinone, via FMN and iron-sulfur (Fe-S) centers, to quinones in the photosynthetic chain and possibly in a chloroplast respiratory chain. The immediate electron acceptor for the enzyme in this species is believed to be plastoquinone. Couples the redox reaction to proton translocation, and thus conserves the redox energy in a proton gradient. This chain is NAD(P)H-quinone oxidoreductase subunit K, chloroplastic, found in Zygnema circumcarinatum (Green alga).